Reading from the N-terminus, the 90-residue chain is Mitochondrial import inner membrane translocase subunit Tim10 (90 aa).

The Twin CX3C motif motif lies at 29-54 (CHRKCVPPHYKEAELSKGESVCLDRC). 2 cysteine pairs are disulfide-bonded: Cys-29/Cys-54 and Cys-33/Cys-50.

The protein belongs to the small Tim family. As to quaternary structure, heterohexamer; composed of 3 copies of TIMM9 and 3 copies of TIMM10/TIM10A, named soluble 70 kDa complex. The complex forms a 6-bladed alpha-propeller structure and associates with the TIMM22 component of the TIM22 complex. Interacts with multi-pass transmembrane proteins in transit. Also forms a complex composed of TIMM9, TIMM10/TIM10A and FXC1/TIM10B.

It localises to the mitochondrion inner membrane. Its function is as follows. Mitochondrial intermembrane chaperone that participates in the import and insertion of multi-pass transmembrane proteins into the mitochondrial inner membrane. May also be required for the transfer of beta-barrel precursors from the TOM complex to the sorting and assembly machinery (SAM complex) of the outer membrane. Acts as a chaperone-like protein that protects the hydrophobic precursors from aggregation and guide them through the mitochondrial intermembrane space. The protein is Mitochondrial import inner membrane translocase subunit Tim10 (Timm10) of Rattus norvegicus (Rat).